The sequence spans 134 residues: ATP synthase epsilon chain, chloroplastic (134 aa).

This sequence belongs to the ATPase epsilon chain family. In terms of assembly, F-type ATPases have 2 components, CF(1) - the catalytic core - and CF(0) - the membrane proton channel. CF(1) has five subunits: alpha(3), beta(3), gamma(1), delta(1), epsilon(1). CF(0) has three main subunits: a, b and c.

It localises to the plastid. It is found in the chloroplast thylakoid membrane. In terms of biological role, produces ATP from ADP in the presence of a proton gradient across the membrane. The polypeptide is ATP synthase epsilon chain, chloroplastic (Chlorella vulgaris (Green alga)).